The primary structure comprises 339 residues: Dicamba O-demethylase, oxygenase component (339 aa).

The Rieske domain occupies 8–110; sequence WYVAALPEEL…VVERDALIWI (103 aa). [2Fe-2S] cluster is bound by residues Cys-48, His-50, Cys-67, and His-70. Fe cation contacts are provided by His-159 and His-164. 3 residues coordinate 3,6-dichloro-2-methoxybenzoate: Asn-229, His-250, and Trp-284. Residue Asp-293 coordinates Fe cation.

As to quaternary structure, homotrimer. The dicamba O-demethylase multicomponent enzyme system is composed of an oxygenase component (DdmC) and an electron transfer component formed by a ferredoxin reductase (DdmA) and a ferredoxin (DdmB). In vitro, dicamba O-demethylase assays in which DdmA2 is substituted for DdmA1 demonstrate that the two enzymes possess nearly identical activities. It depends on [2Fe-2S] cluster as a cofactor.

The enzyme catalyses 3,6-dichloro-2-methoxybenzoate + 2 reduced [2Fe-2S]-[ferredoxin] + O2 + 2 H(+) = 3,6-dichlorosalicylate + formaldehyde + 2 oxidized [2Fe-2S]-[ferredoxin] + H2O. With respect to regulation, activity enhanced by Fe(2+) and Mg(2+) ions. Component of the dicamba O-demethylase multicomponent enzyme system involved in the degradation of the herbicide dicamba. In vitro, catalyzes the O-demethylation of 2-methoxy-3,6-dichlorobenzoic acid (dicamba) to yield 3,6-dichlorosalicylic acid (DCSA) via an exocyclic monooxygenation. This is Dicamba O-demethylase, oxygenase component from Stenotrophomonas maltophilia (Pseudomonas maltophilia).